A 141-amino-acid polypeptide reads, in one-letter code: Deoxyuridine 5'-triphosphate nucleotidohydrolase (141 aa).

The protein belongs to the dUTPase family. Requires Mg(2+) as cofactor.

The enzyme catalyses dUTP + H2O = dUMP + diphosphate + H(+). The protein operates within pyrimidine metabolism; dUMP biosynthesis; dUMP from dCTP (dUTP route): step 2/2. Its function is as follows. This enzyme is involved in nucleotide metabolism: it produces dUMP, the immediate precursor of thymidine nucleotides and it decreases the intracellular concentration of dUTP so that uracil cannot be incorporated into DNA. This is Deoxyuridine 5'-triphosphate nucleotidohydrolase from Chlorella (PBCV-1).